A 448-amino-acid chain; its full sequence is Ribosomal protein uS12 methylthiotransferase RimO (448 aa).

In terms of domain architecture, MTTase N-terminal spans 10 to 120; the sequence is PNIGFVSLGC…VMEHVHKYVP (111 aa). [4Fe-4S] cluster contacts are provided by Cys-19, Cys-55, Cys-84, Cys-152, Cys-156, and Cys-159. Positions 138 to 379 constitute a Radical SAM core domain; the sequence is LTPKHYAYLK…MELQQQISAQ (242 aa). Residues 382-448 enclose the TRAM domain; sequence QQKIGKTLPV…ADEYDLWGTC (67 aa).

The protein belongs to the methylthiotransferase family. RimO subfamily. [4Fe-4S] cluster serves as cofactor.

It localises to the cytoplasm. The catalysed reaction is L-aspartate(89)-[ribosomal protein uS12]-hydrogen + (sulfur carrier)-SH + AH2 + 2 S-adenosyl-L-methionine = 3-methylsulfanyl-L-aspartate(89)-[ribosomal protein uS12]-hydrogen + (sulfur carrier)-H + 5'-deoxyadenosine + L-methionine + A + S-adenosyl-L-homocysteine + 2 H(+). Its function is as follows. Catalyzes the methylthiolation of an aspartic acid residue of ribosomal protein uS12. The polypeptide is Ribosomal protein uS12 methylthiotransferase RimO (Mannheimia succiniciproducens (strain KCTC 0769BP / MBEL55E)).